The chain runs to 140 residues: Probable lipoprotein LppE (140 aa).

An N-terminal signal peptide occupies residues 1–21 (MCNRLVTVTGVAMVVAAGLSA). Cysteine 22 carries N-palmitoyl cysteine lipidation. Cysteine 22 is lipidated: S-diacylglycerol cysteine.

Belongs to the mycobacterial 19 kDa antigen family.

Its subcellular location is the cell membrane. This chain is Probable lipoprotein LppE (lppE), found in Mycobacterium tuberculosis (strain ATCC 25618 / H37Rv).